The chain runs to 880 residues: 3-isopropylmalate dehydratase large subunit gloJ (880 aa).

Residues cysteine 457, cysteine 520, and cysteine 523 each contribute to the [4Fe-4S] cluster site.

The protein belongs to the aconitase/IPM isomerase family. LeuC type 2 subfamily. [4Fe-4S] cluster is required as a cofactor.

The catalysed reaction is (2R,3S)-3-isopropylmalate = (2S)-2-isopropylmalate. Its pathway is mycotoxin biosynthesis. Functionally, 3-isopropylmalate dehydratase large subunit; part of the gene cluster that mediates the biosynthesis of pneumocandins, lipohexapeptides of the echinocandin family that prevent fungal cell wall formation by non-competitive inhibition of beta-1,3-glucan synthase. The 10,12-dimethylmyristoyl side chain is synthesized by the reducing polyketide synthase gloL/GLPKS4. The thioesterase gloN/GLHYD exclusively interacts with gloL/GLPKS4 to maintain turnover of the polyketide side chain. The 10R,12S-dimethylmyristic acid is then transferred to the first thiolation domain of the nonribosomal peptide synthetase gloA/GLNRPS4 by the acyl-AMP ligase gloD/GLligase, followed by its acylation to L-ornithine to trigger elongation of the cyclic hexapeptide. L-ornithine, 4R-hydroxyl-L-proline (generated from L-proline by the dioxygenase gloF/GLOXY2), 3S-hydroxyl-L-homotyrosine (generated by gloG/GLHtyB, gloH/GLHtyA, gloI/GLHtyC, gloJ/GLHtyD and hydroxylated at C-3 by the dioxygenase gloM/GLOXY1), 3R-hydroxyl-L-glutamine (generated from L-glutamine probably by the dioxygenase gloE/GLOXY3) and 3S-hydroxyl-L-proline (generated from L-proline by the dioxygenase gloF/GLOXY2 to yield pneumocandin B0), or 3S-hydroxyl-4S-methyl-L-proline (generated from L-leucine by the dioxygenase gloC/GLOXY4 to yield pneumocandin A0) are sequentially added to the growing chain. The last C domain of gloA/GLNRPS4 is proposed to be responsible for cyclization by condensation to form the peptide bond between L-ornithine and 3S-hydroxyl-4S-methyl-L-proline (for pneumocandin A0) or 3S-hydroxyl-L-proline (for pneumocandin B0). Finally, the subsequent C-4 hydroxylation of 3S-hydroxyl-L-homotyrosine and L-ornithine dihydroxylation at C-4 and C-5 are performed by the cytochrome P450 monooxygenases gloP/GLP450-1 and gloO/GLP450-2, respectively. The chain is 3-isopropylmalate dehydratase large subunit gloJ from Glarea lozoyensis (strain ATCC 20868 / MF5171).